The following is a 444-amino-acid chain: Elongation factor 1-alpha (444 aa).

The 222-residue stretch at 15–236 folds into the tr-type G domain; that stretch reads KPHINLAVVG…VLDTFQPPPR (222 aa). The G1 stretch occupies residues 24 to 31; sequence GHVDNGKS. A GTP-binding site is contributed by 24-31; it reads GHVDNGKS. A Mg(2+)-binding site is contributed by S31. The interval 80–84 is G2; the sequence is GVTIE. Residues 101-104 are G3; sequence DLPG. GTP is bound by residues 101 to 105 and 163 to 166; these read DLPGH and NKMD. A G4 region spans residues 163–166; it reads NKMD. The interval 202-204 is G5; the sequence is SAV.

This sequence belongs to the TRAFAC class translation factor GTPase superfamily. Classic translation factor GTPase family. EF-Tu/EF-1A subfamily.

Its subcellular location is the cytoplasm. It catalyses the reaction GTP + H2O = GDP + phosphate + H(+). GTP hydrolase that promotes the GTP-dependent binding of aminoacyl-tRNA to the A-site of ribosomes during protein biosynthesis. The protein is Elongation factor 1-alpha of Pyrobaculum arsenaticum (strain DSM 13514 / JCM 11321 / PZ6).